A 355-amino-acid chain; its full sequence is Holliday junction branch migration complex subunit RuvB (355 aa).

The tract at residues Thr4–Tyr190 is large ATPase domain (RuvB-L). ATP-binding positions include Leu29, Arg30, Gly71, Lys74, Thr75, Thr76, Glu137 to Tyr139, Arg180, Tyr190, and Arg227. Residue Thr75 participates in Mg(2+) binding. The tract at residues Asn191–Asp261 is small ATPAse domain (RuvB-S). Residues Ala264–Thr355 form a head domain (RuvB-H) region. DNA is bound by residues Arg300, Arg319, and Arg324.

The protein belongs to the RuvB family. Homohexamer. Forms an RuvA(8)-RuvB(12)-Holliday junction (HJ) complex. HJ DNA is sandwiched between 2 RuvA tetramers; dsDNA enters through RuvA and exits via RuvB. An RuvB hexamer assembles on each DNA strand where it exits the tetramer. Each RuvB hexamer is contacted by two RuvA subunits (via domain III) on 2 adjacent RuvB subunits; this complex drives branch migration. In the full resolvosome a probable DNA-RuvA(4)-RuvB(12)-RuvC(2) complex forms which resolves the HJ.

It localises to the cytoplasm. The catalysed reaction is ATP + H2O = ADP + phosphate + H(+). The RuvA-RuvB-RuvC complex processes Holliday junction (HJ) DNA during genetic recombination and DNA repair, while the RuvA-RuvB complex plays an important role in the rescue of blocked DNA replication forks via replication fork reversal (RFR). RuvA specifically binds to HJ cruciform DNA, conferring on it an open structure. The RuvB hexamer acts as an ATP-dependent pump, pulling dsDNA into and through the RuvAB complex. RuvB forms 2 homohexamers on either side of HJ DNA bound by 1 or 2 RuvA tetramers; 4 subunits per hexamer contact DNA at a time. Coordinated motions by a converter formed by DNA-disengaged RuvB subunits stimulates ATP hydrolysis and nucleotide exchange. Immobilization of the converter enables RuvB to convert the ATP-contained energy into a lever motion, pulling 2 nucleotides of DNA out of the RuvA tetramer per ATP hydrolyzed, thus driving DNA branch migration. The RuvB motors rotate together with the DNA substrate, which together with the progressing nucleotide cycle form the mechanistic basis for DNA recombination by continuous HJ branch migration. Branch migration allows RuvC to scan DNA until it finds its consensus sequence, where it cleaves and resolves cruciform DNA. The chain is Holliday junction branch migration complex subunit RuvB from Paraburkholderia xenovorans (strain LB400).